The chain runs to 324 residues: Olfactory receptor 52I1 (324 aa).

At 1–29 (MLGPAYNHTMETPASFLLVGIPGLQSSHL) the chain is on the extracellular side. An N-linked (GlcNAc...) asparagine glycan is attached at asparagine 7. Residues 30–50 (WLAISLSAMYITALLGNTLIV) form a helical membrane-spanning segment. The Cytoplasmic segment spans residues 51 to 58 (TAIWMDST). The helical transmembrane segment at 59 to 79 (RHEPMYCFLCVLAAVDIVMAS) threads the bilayer. Topologically, residues 80–103 (SVVPKMVSIFCSGDSSISFSACFT) are extracellular. Residues cysteine 101 and cysteine 193 are joined by a disulfide bond. The helical transmembrane segment at 104–124 (QMFFVHLATAVETGLLLTMAF) threads the bilayer. The Cytoplasmic segment spans residues 125-143 (DRYVAICKPLHYKRILTPQ). The chain crosses the membrane as a helical span at residues 144–164 (VMLGMSMAVTIRAVTFMTPLS). Residues 165–200 (WMMNHLPFCGSNVVVHSYCKHIALARLACADPVPSS) lie on the Extracellular side of the membrane. A helical membrane pass occupies residues 201–221 (LYSLIGSSLMVGSDVAFIAAS). The Cytoplasmic segment spans residues 222-241 (YILILRAVFDLSSKTAQLKA). The helical transmembrane segment at 242–262 (LSTCGSHVGVMALYYLPGMAS) threads the bilayer. At 263–278 (IYAAWLGQDIVPLHTQ) the chain is on the extracellular side. Residues 279–299 (VLLADLYVIIPATLNPIIYGM) form a helical membrane-spanning segment. Residues 300–324 (RTKQLLEGIWSYLMHFLFDHSNLGS) lie on the Cytoplasmic side of the membrane.

The protein belongs to the G-protein coupled receptor 1 family.

Its subcellular location is the cell membrane. In terms of biological role, odorant receptor. The polypeptide is Olfactory receptor 52I1 (OR52I1) (Homo sapiens (Human)).